We begin with the raw amino-acid sequence, 247 residues long: Putative 2-succinyl-6-hydroxy-2,4-cyclohexadiene-1-carboxylate synthase (247 aa).

Residues 4–229 (IIFLHGLLGT…CAGHNSHLEN (226 aa)) form the AB hydrolase-1 domain.

The protein belongs to the AB hydrolase superfamily. MenH family. As to quaternary structure, monomer.

It catalyses the reaction 5-enolpyruvoyl-6-hydroxy-2-succinyl-cyclohex-3-ene-1-carboxylate = (1R,6R)-6-hydroxy-2-succinyl-cyclohexa-2,4-diene-1-carboxylate + pyruvate. The protein operates within quinol/quinone metabolism; 1,4-dihydroxy-2-naphthoate biosynthesis; 1,4-dihydroxy-2-naphthoate from chorismate: step 3/7. Its pathway is quinol/quinone metabolism; menaquinone biosynthesis. Its function is as follows. Catalyzes a proton abstraction reaction that results in 2,5-elimination of pyruvate from 2-succinyl-5-enolpyruvyl-6-hydroxy-3-cyclohexene-1-carboxylate (SEPHCHC) and the formation of 2-succinyl-6-hydroxy-2,4-cyclohexadiene-1-carboxylate (SHCHC). The polypeptide is Putative 2-succinyl-6-hydroxy-2,4-cyclohexadiene-1-carboxylate synthase (Haemophilus influenzae (strain ATCC 51907 / DSM 11121 / KW20 / Rd)).